Reading from the N-terminus, the 231-residue chain is NADH-ubiquinone oxidoreductase chain 4 (231 aa).

Transmembrane regions (helical) follow at residues 1–21 (PIAG…YGII), 34–54 (MFLP…LTCL), 63–85 (IAYS…TPWG), 89–111 (AMAL…NTTY), 128–148 (ILPM…ATPP), and 156–176 (LLIM…LGLS).

Belongs to the complex I subunit 4 family.

The protein resides in the mitochondrion membrane. It catalyses the reaction a ubiquinone + NADH + 5 H(+)(in) = a ubiquinol + NAD(+) + 4 H(+)(out). Its function is as follows. Core subunit of the mitochondrial membrane respiratory chain NADH dehydrogenase (Complex I) that is believed to belong to the minimal assembly required for catalysis. Complex I functions in the transfer of electrons from NADH to the respiratory chain. The immediate electron acceptor for the enzyme is believed to be ubiquinone. The sequence is that of NADH-ubiquinone oxidoreductase chain 4 (MT-ND4) from Bothriechis lateralis (Side-striped palm pitviper).